Reading from the N-terminus, the 748-residue chain is Choline O-acetyltransferase (748 aa).

Residues methionine 1–glycine 10 show a composition bias toward basic residues. Residues methionine 1 to alanine 89 form a disordered region. Basic and acidic residues predominate over residues tryptophan 17 to arginine 32. The span at glycine 40–glycine 53 shows a compositional bias: gly residues. 2 stretches are compositionally biased toward low complexity: residues asparagine 54–threonine 65 and histidine 73–alanine 89. Serine 125 carries the post-translational modification Phosphoserine. The active-site Proton acceptor is the histidine 442. Serine 473 bears the Phosphoserine mark. CoA is bound by residues glycine 520–aspartate 532, serine 558, and glutamine 659. The tract at residues proline 727–proline 748 is disordered.

This sequence belongs to the carnitine/choline acetyltransferase family.

The enzyme catalyses choline + acetyl-CoA = acetylcholine + CoA. Its function is as follows. Catalyzes the reversible synthesis of acetylcholine (ACh) from acetyl CoA and choline at cholinergic synapses. The protein is Choline O-acetyltransferase (CHAT) of Homo sapiens (Human).